The primary structure comprises 194 residues: Cysteine and glycine-rich protein 2 (194 aa).

Residues 10-61 enclose the LIM zinc-binding 1 domain; the sequence is CGACGRTVYHAEEVQCDGRSFHRCCFLCMVCRKNLDSTTVAIHDAEVYCKSC. The short motif at 64-69 is the Nuclear localization signal element; sequence KKYGPK. Positions 120–171 constitute an LIM zinc-binding 2 domain; the sequence is CSRCGDSVYAAEKVIGAGKPWHKNCFRCAKCGKSLESTTLTEKEGEIYCKGC.

Its subcellular location is the nucleus. Its function is as follows. Totally down-regulated in transformed cells. May therefore take part in the control of cell growth and differentiation. This chain is Cysteine and glycine-rich protein 2 (CSRP2), found in Gallus gallus (Chicken).